The chain runs to 495 residues: Ectonucleoside triphosphate diphosphohydrolase 2 (495 aa).

Residues 1-4 (MAGK) lie on the Cytoplasmic side of the membrane. A helical transmembrane segment spans residues 5–25 (LVSLVPPLLLAAVGLAGLLLL). Residues 26 to 462 (CVPTQDVREP…PGLRKGTHFS (437 aa)) are Extracellular-facing. N-linked (GlcNAc...) asparagine glycosylation is present at Asn-64. An intrachain disulfide couples Cys-75 to Cys-99. Asn-129 carries an N-linked (GlcNAc...) asparagine glycan. The active-site Proton acceptor is Glu-165. ATP is bound at residue 204-208 (GASTQ). Cystine bridges form between Cys-242–Cys-284 and Cys-265–Cys-310. Asn-294 and Asn-319 each carry an N-linked (GlcNAc...) asparagine glycan. Cystine bridges form between Cys-323–Cys-328 and Cys-377–Cys-399. 2 N-linked (GlcNAc...) asparagine glycosylation sites follow: Asn-378 and Asn-443. The helical transmembrane segment at 463 to 483 (SWVALLLLFTVLILAALVLLL) threads the bilayer. Over 484-495 (RQVRSAKSPGAL) the chain is Cytoplasmic.

It belongs to the GDA1/CD39 NTPase family. It depends on Ca(2+) as a cofactor. Requires Mg(2+) as cofactor.

Its subcellular location is the cell membrane. Functionally, in the nervous system, could hydrolyze ATP and other nucleotides to regulate purinergic neurotransmission. Hydrolyzes ADP only to a marginal extent. The chain is Ectonucleoside triphosphate diphosphohydrolase 2 (Entpd2) from Mus musculus (Mouse).